The sequence spans 388 residues: Dual-specificity RNA methyltransferase RlmN (388 aa).

The Proton acceptor role is filled by E109. Residues E115–D354 form the Radical SAM core domain. C122 and C359 are joined by a disulfide. [4Fe-4S] cluster is bound by residues C129, C133, and C136. Residues G183–E184, S215, S237–H239, and N316 contribute to the S-adenosyl-L-methionine site. The active-site S-methylcysteine intermediate is the C359.

It belongs to the radical SAM superfamily. RlmN family. Requires [4Fe-4S] cluster as cofactor.

Its subcellular location is the cytoplasm. The enzyme catalyses adenosine(2503) in 23S rRNA + 2 reduced [2Fe-2S]-[ferredoxin] + 2 S-adenosyl-L-methionine = 2-methyladenosine(2503) in 23S rRNA + 5'-deoxyadenosine + L-methionine + 2 oxidized [2Fe-2S]-[ferredoxin] + S-adenosyl-L-homocysteine. The catalysed reaction is adenosine(37) in tRNA + 2 reduced [2Fe-2S]-[ferredoxin] + 2 S-adenosyl-L-methionine = 2-methyladenosine(37) in tRNA + 5'-deoxyadenosine + L-methionine + 2 oxidized [2Fe-2S]-[ferredoxin] + S-adenosyl-L-homocysteine. Its function is as follows. Specifically methylates position 2 of adenine 2503 in 23S rRNA and position 2 of adenine 37 in tRNAs. m2A2503 modification seems to play a crucial role in the proofreading step occurring at the peptidyl transferase center and thus would serve to optimize ribosomal fidelity. This Enterobacter sp. (strain 638) protein is Dual-specificity RNA methyltransferase RlmN.